The primary structure comprises 32 residues: U3-ctenitoxin-Pk1a (32 aa).

Disulfide bonds link cysteine 3–cysteine 17, cysteine 10–cysteine 21, and cysteine 16–cysteine 30.

Belongs to the neurotoxin 17 (21C2) family. In terms of tissue distribution, expressed by the venom gland.

Its subcellular location is the secreted. Its function is as follows. May act as a neurotoxin. The protein is U3-ctenitoxin-Pk1a of Phoneutria keyserlingi (Brazilian wandering spider).